Consider the following 364-residue polypeptide: MKFLDEAKVYIKSGDGGGGSVSFRREKFIEFGGPDGGDGGRGGDVWVEAVNGLNTLIDFRYQQHFKATIGTHGMGRNRTGANGSDVTLKVPVGTQIFEEDQETLICDLTVEGQRYCLAHGGNGGFGNAHFKTSTNQAPDWANPGLPGEEKTIWLHLKLIADAGLVGLPNAGKSTFLASVTRARPKIANYPFTTLHPNLGVATIDEREFILADIPGLIEGAHEGVGIGDRFLGHVERTRVLLHLISAQEEKVGKAYKTVKHELEAYGNELTDKAEIVALSQIDVLDDAELKKKTKELAKACGKTPFQISAVTGKGMTEVLRALRDIIVEANTEEKPAKVPKLRHRDMVVTDEGEDKGGDEGDDQP.

The Obg domain maps to 1–159; sequence MKFLDEAKVY…KTIWLHLKLI (159 aa). Residues 160-327 form the OBG-type G domain; the sequence is ADAGLVGLPN…VLRALRDIIV (168 aa). GTP contacts are provided by residues 166-173, 191-195, 212-215, 279-282, and 308-310; these read GLPNAGKS, FTTLH, DIPG, SQID, and SAV. Mg(2+) is bound by residues serine 173 and threonine 193. The tract at residues 333-364 is disordered; it reads EKPAKVPKLRHRDMVVTDEGEDKGGDEGDDQP.

It belongs to the TRAFAC class OBG-HflX-like GTPase superfamily. OBG GTPase family. In terms of assembly, monomer. Mg(2+) is required as a cofactor.

The protein localises to the cytoplasm. Its function is as follows. An essential GTPase which binds GTP, GDP and possibly (p)ppGpp with moderate affinity, with high nucleotide exchange rates and a fairly low GTP hydrolysis rate. Plays a role in control of the cell cycle, stress response, ribosome biogenesis and in those bacteria that undergo differentiation, in morphogenesis control. The sequence is that of GTPase Obg from Rhizobium johnstonii (strain DSM 114642 / LMG 32736 / 3841) (Rhizobium leguminosarum bv. viciae).